A 668-amino-acid polypeptide reads, in one-letter code: DNA damage-responsive serine/threonine-protein kinase RqkA (668 aa).

A Protein kinase domain is found at 13–272 (YELLALLGEG…SGAALAHLWA (260 aa)). Residues 19–27 (LGEGGSAQV) and Lys-42 each bind ATP. The active-site Proton acceptor is Asp-137.

The protein belongs to the protein kinase superfamily. Ser/Thr protein kinase family. It depends on pyrroloquinoline quinone as a cofactor. Autophosphorylated.

The catalysed reaction is L-seryl-[protein] + ATP = O-phospho-L-seryl-[protein] + ADP + H(+). It catalyses the reaction L-threonyl-[protein] + ATP = O-phospho-L-threonyl-[protein] + ADP + H(+). With respect to regulation, autokinase activity is stimulated by DNA damage. Stimulated by PQQ and DNA ends in vitro. Functionally, plays an important role in radiation resistance and DNA double-strand break (DSB) repair. Involved in transcriptional regulation of genes important for bacterial stress response. Phosphorylates PprA in vitro. This chain is DNA damage-responsive serine/threonine-protein kinase RqkA (rqkA), found in Deinococcus radiodurans (strain ATCC 13939 / DSM 20539 / JCM 16871 / CCUG 27074 / LMG 4051 / NBRC 15346 / NCIMB 9279 / VKM B-1422 / R1).